We begin with the raw amino-acid sequence, 977 residues long: Mineralocorticoid receptor (977 aa).

A compositionally biased stretch (basic and acidic residues) spans 1-19; sequence METKGYHSRPEGLDMERRW. Disordered stretches follow at residues 1 to 37 and 231 to 288; these read METK…AERT and QGTP…VSSP. Positions 1 to 601 are modulating; sequence METKGYHSRP…STGSSRPSKI (601 aa). A compositionally biased stretch (polar residues) spans 231-243; sequence QGTPLTCSPTVDN. A phosphoserine mark is found at Ser250, Ser259, Ser283, Ser287, and Ser299. Positions 259-288 are enriched in low complexity; that stretch reads SPLSSPLSSMKSPISSPPSHCSVKSPVSSP. Disordered stretches follow at residues 305–327 and 344–368; these read NSRC…SPAA and SGAS…KGAH. Zn(2+)-binding residues include Cys602, Cys605, Cys619, Cys622, Cys638, Cys644, Cys654, and Cys657. 2 consecutive NR C4-type zinc fingers follow at residues 602–622 and 638–662; these read CLVC…CGSC and CAGR…LQKC. Positions 602 to 667 form a DNA-binding region, nuclear receptor; the sequence is CLVCGDGASG…RLQKCLQAGM (66 aa). A hinge region spans residues 668–718; that stretch reads NLGARKSKKLGKLKGLHEEQPQQPPPPQSPEEGTTYIAPAKEPSVNTALVP. The disordered stretch occupies residues 682–703; the sequence is GLHEEQPQQPPPPQSPEEGTTY. The NR LBD domain occupies 719 to 957; the sequence is QLSSISRALT…EFPAMLVEII (239 aa). 21-hydroxyprogesterone is bound by residues Asn763 and Gln769. Aldosterone-binding residues include Asn763 and Gln769. The progesterone site is built by Asn763 and Gln769. Positions 775–778 are important for coactivator binding; it reads KWAK. Arg810 and Thr938 together coordinate 21-hydroxyprogesterone. Aldosterone is bound by residues Arg810 and Thr938. 2 residues coordinate progesterone: Arg810 and Thr938.

The protein belongs to the nuclear hormone receptor family. NR3 subfamily.

The protein resides in the cytoplasm. The protein localises to the nucleus. In terms of biological role, receptor for both mineralocorticoids (MC) such as aldosterone and glucocorticoids (GC) such as corticosterone or cortisol. Binds to mineralocorticoid response elements (MRE) and transactivates target genes. The effect of MC is to increase ion and water transport and thus raise extracellular fluid volume and blood pressure and lower potassium levels. This chain is Mineralocorticoid receptor (NR3C2), found in Tupaia belangeri (Common tree shrew).